The following is a 372-amino-acid chain: GDSL esterase/lipase At1g54020 (372 aa).

Residues 1–26 form the signal peptide; sequence MECSSVSVLGILLVFPLLHNLVTISG. The active-site Nucleophile is Ser40. N-linked (GlcNAc...) asparagine glycosylation is found at Asn161 and Asn280. Residues Asp314 and His317 contribute to the active site.

This sequence belongs to the 'GDSL' lipolytic enzyme family.

It is found in the secreted. In Arabidopsis thaliana (Mouse-ear cress), this protein is GDSL esterase/lipase At1g54020.